The following is a 246-amino-acid chain: MFFAVITLFPEMFEAITAYGISGRAAKRDIVQVTCINPRDFAEGSYRRVDERPFGGGPGMVMMAEPLAKAINHAKQLASQAGCVHVPVVYMSPQGKTLNEQAVQQFVDYDGLIVLCGRYEGVDERLIQHYVDQEWSIGDYVLSGGELPAMVLLDSIIRRLPNVMSDEQSAIQDSFVDGLLDCPQYTKPDQFEGLDVPEILKSGHHANIEKWRFLQRYQRTLERRPELIEQVTLTKQQKKWLSDEQG.

S-adenosyl-L-methionine contacts are provided by residues Gly117 and 137–142 (IGDYVL).

This sequence belongs to the RNA methyltransferase TrmD family. As to quaternary structure, homodimer.

Its subcellular location is the cytoplasm. The enzyme catalyses guanosine(37) in tRNA + S-adenosyl-L-methionine = N(1)-methylguanosine(37) in tRNA + S-adenosyl-L-homocysteine + H(+). Functionally, specifically methylates guanosine-37 in various tRNAs. The chain is tRNA (guanine-N(1)-)-methyltransferase from Acinetobacter baumannii (strain SDF).